We begin with the raw amino-acid sequence, 311 residues long: Cathepsin B (311 aa).

Positions 1 to 19 (MRVLLSLVVILFIINSAFA) are cleaved as a signal peptide. The propeptide occupies 20 to 78 (VKINIGRPTKSHKTIHHETWVEEQTDQFDNIKVGQLLGFKRSPNRPKLQIKSYDPLGVQ). N-linked (GlcNAc...) asparagine glycosylation occurs at asparagine 91. Cystine bridges form between cysteine 92/cysteine 121, cysteine 104/cysteine 145, cysteine 138/cysteine 191, cysteine 167/cysteine 195, and cysteine 175/cysteine 182. Cysteine 107 is a catalytic residue. Asparagine 198 carries N-linked (GlcNAc...) asparagine glycosylation. Catalysis depends on residues histidine 261 and asparagine 281. Asparagine 290 carries N-linked (GlcNAc...) asparagine glycosylation.

This sequence belongs to the peptidase C1 family.

Its subcellular location is the lysosome. The catalysed reaction is Hydrolysis of proteins with broad specificity for peptide bonds. Preferentially cleaves -Arg-Arg-|-Xaa bonds in small molecule substrates (thus differing from cathepsin L). In addition to being an endopeptidase, shows peptidyl-dipeptidase activity, liberating C-terminal dipeptides.. In terms of biological role, thiol protease which is believed to participate in intracellular degradation and turnover of proteins. In Dictyostelium discoideum (Social amoeba), this protein is Cathepsin B (ctsB).